We begin with the raw amino-acid sequence, 181 residues long: uncharacterized protein (181 aa).

Belongs to the methyltransferase superfamily.

This is an uncharacterized protein from Bacillus subtilis (strain 168).